The sequence spans 339 residues: Methyltransferase ptaI (339 aa).

It belongs to the methyltransferase superfamily.

Its pathway is secondary metabolite biosynthesis. Methyltransferase; part of the gene cluster that mediates the biosynthesis of pestheic acid, a diphenyl ether which is a biosynthetic precursor of the unique chloropupukeananes. The biosynthesis initiates from condensation of acetate and malonate units catalyzed by the non-reducing PKS ptaA. As the ptaA protein is TE/CLC domain-deficient, hydrolysis and Claisen cyclization of the polyketide could be catalyzed by ptaB containing a beta-lactamase domain. The ptaB protein might hydrolyze the thioester bond between the ACP of ptaA and the intermediate to release atrochrysone carboxylic acid, which is spontaneously dehydrated to form endocrocin anthrone. Endocrocin anthrone is then converted to endocrocin, catalyzed by the anthrone oxygenase ptaC. Spontaneous decarboxylation of endocrocin occurs to generate emodin. An O-methyltransferase (ptaH or ptaI) could methylate emodin to form physcion. PtaJ could then catalyze the oxidative cleavage of physcion, and rotation of the intermediate could then afford desmethylisosulochrin. PtaF, a putative NADH-dependent oxidoreductase, might also participate in the oxidative cleavage step. Desmethylisosulochrin is then transformed by another O-methyltransferase (ptaH or ptaI) to form isosulochrin. Chlorination of isosulochrin by ptaM in the cyclohexadienone B ring then produces chloroisosulochrin. PtaE is responsible for the oxidative coupling reactions of both benzophenones isosulouchrin and chloroisosulochrin to RES-1214-1 and pestheic acid respectively, regardless of chlorination. This chain is Methyltransferase ptaI, found in Pestalotiopsis fici (strain W106-1 / CGMCC3.15140).